The following is a 189-amino-acid chain: Interferon alpha-6 (189 aa).

The first 20 residues, 1-20 (MALPFALLMALVVLSCKSSC), serve as a signal peptide directing secretion. 2 cysteine pairs are disulfide-bonded: cysteine 24–cysteine 122 and cysteine 52–cysteine 162.

Belongs to the alpha/beta interferon family.

Its subcellular location is the secreted. Functionally, produced by macrophages, IFN-alpha have antiviral activities. Interferon stimulates the production of two enzymes: a protein kinase and an oligoadenylate synthetase. The chain is Interferon alpha-6 (IFNA6) from Homo sapiens (Human).